We begin with the raw amino-acid sequence, 383 residues long: S-adenosylmethionine synthase 1 (383 aa).

His15 provides a ligand contact to ATP. Position 17 (Asp17) interacts with Mg(2+). Glu43 provides a ligand contact to K(+). Positions 56 and 99 each coordinate L-methionine. Residues 99–109 (QSPDIDLGVSR) form a flexible loop region. Residues 162-164 (DGK), 228-229 (RF), Asp237, 243-244 (RK), Ala260, and Lys264 each bind ATP. Asp237 is a binding site for L-methionine. Residue Lys268 coordinates L-methionine.

It belongs to the AdoMet synthase family. As to quaternary structure, homotetramer; dimer of dimers. Requires Mg(2+) as cofactor. K(+) serves as cofactor.

It is found in the cytoplasm. The catalysed reaction is L-methionine + ATP + H2O = S-adenosyl-L-methionine + phosphate + diphosphate. Its pathway is amino-acid biosynthesis; S-adenosyl-L-methionine biosynthesis; S-adenosyl-L-methionine from L-methionine: step 1/1. Its function is as follows. Catalyzes the formation of S-adenosylmethionine (AdoMet) from methionine and ATP. The overall synthetic reaction is composed of two sequential steps, AdoMet formation and the subsequent tripolyphosphate hydrolysis which occurs prior to release of AdoMet from the enzyme. The chain is S-adenosylmethionine synthase 1 from Rhodospirillum rubrum (strain ATCC 11170 / ATH 1.1.1 / DSM 467 / LMG 4362 / NCIMB 8255 / S1).